The primary structure comprises 510 residues: GMP synthase [glutamine-hydrolyzing] (510 aa).

A Glutamine amidotransferase type-1 domain is found at 5–195; it reads LVLVVDFGGQ…LFNVCNLKGD (191 aa). Cys-82 functions as the Nucleophile in the catalytic mechanism. Residues His-169 and Glu-171 contribute to the active site. The region spanning 196 to 385 is the GMPS ATP-PPase domain; it reads WSMSSFAEQQ…LGIPHKLVWR (190 aa). 223–229 lines the ATP pocket; sequence SGGVDSS.

As to quaternary structure, homodimer.

The enzyme catalyses XMP + L-glutamine + ATP + H2O = GMP + L-glutamate + AMP + diphosphate + 2 H(+). It functions in the pathway purine metabolism; GMP biosynthesis; GMP from XMP (L-Gln route): step 1/1. Functionally, catalyzes the synthesis of GMP from XMP. This chain is GMP synthase [glutamine-hydrolyzing], found in Clostridium botulinum (strain Okra / Type B1).